The primary structure comprises 107 residues: Heme-degrading monooxygenase (107 aa).

Residues 2-94 enclose the ABM domain; sequence IIVTNTAKIT…YILDNKISYY (93 aa). Residue asparagine 6 coordinates Fe cation. Heme is bound at residue histidine 76.

The protein belongs to the antibiotic biosynthesis monooxygenase family. Heme-degrading monooxygenase IsdG subfamily. As to quaternary structure, homodimer.

The protein resides in the cytoplasm. It carries out the reaction heme b + 3 reduced [NADPH--hemoprotein reductase] + 3 O2 = biliverdin IXalpha + CO + Fe(2+) + 3 oxidized [NADPH--hemoprotein reductase] + 3 H2O + H(+). Its function is as follows. Allows bacterial pathogens to use the host heme as an iron source. Catalyzes the oxidative degradation of the heme macrocyclic porphyrin ring to the biliverdin in the presence of a suitable electron donor such as ascorbate or NADPH--cytochrome P450 reductase, with subsequent release of free iron. This is Heme-degrading monooxygenase from Bacillus cereus (strain AH187).